We begin with the raw amino-acid sequence, 146 residues long: Angiogenin (146 aa).

Residues 1–24 form the signal peptide; it reads MVMGLGLFLLVFMLGLGLTLPTLA. Gln25 is subject to Pyrrolidone carboxylic acid. The Proton acceptor role is filled by His37. Residue Arg45 participates in tRNA binding. Disulfide bonds link Cys50–Cys105, Cys63–Cys116, and Cys81–Cys131. The Nucleolar localization signal signature appears at 55-59; it reads RRRHL. TRNA-binding residues include Cys105 and Ile127. The Proton donor role is filled by His138.

The protein belongs to the pancreatic ribonuclease family. In terms of assembly, homodimer. Interacts with RNH1; inhibiting ANG ribonuclease activity. Interacts with PCNA.

It localises to the secreted. It is found in the nucleus. Its subcellular location is the nucleolus. The protein resides in the cytoplasm. The protein localises to the stress granule. Its activity is regulated as follows. Has weak tRNA ribonuclease activity by itself due to partial autoinhibition by its C-terminus, which folds into a short alpha-helix that partially occludes the substrate-binding site. In absence of stress, the ribonuclease activity is inhibited by RNH1 in the cytoplasm. In response to stress, dissociates from RNH1 in the cytoplasm and associates with cytoplasmic ribosomes with vacant A-sites: ribosomes directly activate the tRNA ribonuclease activity of ANG by refolding the C-terminal alpha-helix. In response to stress, the angiogenic activity of ANG is inhibited by RNH1 in the nucleus. Functionally, secreted ribonuclease that can either promote or restrict cell proliferation of target cells, depending on the context. Endocytosed in target cells via its receptor PLXNB2 and translocates to the cytoplasm or nucleus. Under stress conditions, localizes to the cytoplasm and promotes the assembly of stress granules (SGs): specifically cleaves a subset of tRNAs within anticodon loops to produce tRNA-derived stress-induced fragments (tiRNAs), resulting in translation repression and inhibition of cell proliferation. tiRNas also prevent formation of apoptosome, thereby promoting cell survival. Preferentially cleaves RNAs between a pyrimidine and an adenosine residue, suggesting that it cleaves the anticodon loop of tRNA(Ala) (32-UUAGCAU-38) after positions 33 and 36. Cleaves a subset of tRNAs, including tRNA(Ala), tRNA(Glu), tRNA(Gly), tRNA(Lys), tRNA(Val), tRNA(His), tRNA(Asp) and tRNA(Sec). Under growth conditions and in differentiated cells, translocates to the nucleus and stimulates ribosomal RNA (rRNA) transcription, including that containing the initiation site sequences of 45S rRNA, thereby promoting cell growth and proliferation. Angiogenin induces vascularization of normal and malignant tissues via its ability to promote rRNA transcription. Involved in hematopoietic stem and progenitor cell (HSPC) growth and survival by promoting rRNA transcription in growth conditions and inhibiting translation in response to stress, respectively. Mediates the crosstalk between myeloid and intestinal epithelial cells to protect the intestinal epithelial barrier integrity: secreted by myeloid cells and promotes intestinal epithelial cells proliferation and survival. Also mediates osteoclast-endothelial cell crosstalk in growing bone: produced by osteoclasts and protects the neighboring vascular cells against senescence by promoting rRNA transcription. This chain is Angiogenin (ANG), found in Papio hamadryas (Hamadryas baboon).